An 84-amino-acid chain; its full sequence is MGQAVSYLTYTLRRCCKKNTLTTESGEVIELDDEHYDTVDLDDLRCSDPLMQPKFVLLKNGRRGKRNREYDNDHEKYVMMFNKE.

A lipid anchor (N-myristoyl glycine; by host) is attached at Gly2. An asp/Glu-rich (acidic) region spans residues 40–46 (DLDDLRC).

It belongs to the herpesviridae cytoplasmic envelopment protein 3 family. Interacts with cytoplasmic envelopment protein 2; this interaction is essential for the proper localization of each protein to the assembly complex and thus for the production of infectious virus. Myristoylation and palmitoylation (probably on one or more of the nearby cysteines at the N-terminus) enable membrane-binding and Golgi apparatus-specific targeting and are essential for efficient packaging. In terms of processing, phosphorylated. Phosphorylation does not seem to be required for recycling to the host Golgi apparatus. Packaging is selective for underphosphorylated forms.

Its subcellular location is the virion tegument. The protein localises to the virion membrane. It localises to the host cell membrane. It is found in the host Golgi apparatus membrane. Functionally, plays an important role in the cytoplasmic envelopment of tegument proteins and capsids during the assembly and egress processes. Also participates in viral entry at the fusion step probably by regulating the core fusion machinery. This is Cytoplasmic envelopment protein 3 (MDV023) from Gallus gallus (Chicken).